We begin with the raw amino-acid sequence, 389 residues long: TelA-like protein SH1505 (389 aa).

It belongs to the TelA family.

In Staphylococcus haemolyticus (strain JCSC1435), this protein is TelA-like protein SH1505.